Consider the following 561-residue polypeptide: Sesquiterpene synthase 1 (561 aa).

Asp313, Asp317, Asp458, and Glu466 together coordinate Mg(2+). Positions 313 to 317 (DDIYD) match the DDXXD motif motif.

It belongs to the terpene synthase family. Tpsa subfamily. It depends on Mn(2+) as a cofactor. Mg(2+) is required as a cofactor.

The protein resides in the cytoplasm. The enzyme catalyses (2E,6E)-farnesyl diphosphate = (1S,8aR)-delta-cadinene + diphosphate. It participates in secondary metabolite biosynthesis; terpenoid biosynthesis. In terms of biological role, involved in the biosynthesis of delta-cadinene. The chain is Sesquiterpene synthase 1 (STS1) from Thapsia garganica (Deadly carrot).